The following is a 1034-amino-acid chain: Vacuolar membrane protease (1034 aa).

The Cytoplasmic portion of the chain corresponds to 1–11 (MAVKNPFGFTT). The helical transmembrane segment at 12-32 (GPVTFWLIVVYAAFLIPLVWI) threads the bilayer. The Vacuolar segment spans residues 33 to 418 (HESVPAVPSS…GFAILELRGL (386 aa)). 2 N-linked (GlcNAc...) asparagine glycosylation sites follow: Asn51 and Asn141. Positions 200 and 212 each coordinate Zn(2+). The Proton acceptor role is filled by Glu246. Zn(2+) is bound by residues Glu247, Glu272, and His345. The helical transmembrane segment at 419–439 (FAWTLTLLIVSPLVLALVTYI) threads the bilayer. Residues 440 to 470 (LSRKDKYYFFSRKVTADEDDEPVSVGGWKGF) lie on the Cytoplasmic side of the membrane. Residues 471-491 (FRFPFALVLSASITVLSAFLI) form a helical membrane-spanning segment. The Vacuolar segment spans residues 492–497 (RRVNPH). Residues 498-518 (IIYSSPYAVWAMTLSLFFLVF) traverse the membrane as a helical segment. At 519 to 536 (WTIAKGASVVRPSALQRG) the chain is on the cytoplasmic side. Residues 537 to 557 (YAHIWLFVISWVILVAVTAAA) traverse the membrane as a helical segment. Over 558-567 (DRFKIASGYP) the chain is Vacuolar. The helical transmembrane segment at 568 to 588 (FAFFHSAVFVSALISLCDLFA) threads the bilayer. Over 589–703 (LPSKQEFARN…NLPSWTWFFQ (115 aa)) the chain is Cytoplasmic. Residues 623–653 (HSHVEDDVAEEPTETTPLRSGENGNGNNGTI) form a disordered region. A helical transmembrane segment spans residues 704 to 724 (LLLLAPITITVFLQIALFIVS). At 725 to 736 (AIHSAAADGNDP) the chain is on the vacuolar side. The helical transmembrane segment at 737–757 (ILVYAAIAAFSIIILLPATPF) threads the bilayer. Topologically, residues 758–762 (IHRAS) are cytoplasmic. A helical membrane pass occupies residues 763-783 (FYLPLFLLLVFFVTLIYNLVA). Over 784-1034 (FPFSAENRLK…LVEGRKKFRA (251 aa)) the chain is Vacuolar. N-linked (GlcNAc...) asparagine glycans are attached at residues Asn805, Asn866, and Asn879.

This sequence belongs to the peptidase M28 family. The cofactor is Zn(2+).

Its subcellular location is the vacuole membrane. Functionally, may be involved in vacuolar sorting and osmoregulation. This is Vacuolar membrane protease from Colletotrichum graminicola (strain M1.001 / M2 / FGSC 10212) (Maize anthracnose fungus).